The following is a 1831-amino-acid chain: Transmembrane protein 131 homolog (1831 aa).

The N-terminal stretch at M1 to A29 is a signal peptide. The Lumenal portion of the chain corresponds to D30–N1169. The papD-L domain stretch occupies residues E118–L294. Residues I1170–A1190 form a helical membrane-spanning segment. The Cytoplasmic portion of the chain corresponds to Y1191–N1831. A compositionally biased stretch (low complexity) spans S1223–T1234. Disordered regions lie at residues S1223–T1252, G1325–D1516, Q1663–P1759, and W1800–N1831. Residues P1338 to A1349 are compositionally biased toward acidic residues. Low complexity-rich tracts occupy residues P1394–Q1407 and Q1435–T1448. The segment covering E1455–K1467 has biased composition (basic and acidic residues). Residues T1480–A1497 are compositionally biased toward polar residues. Residues P1500 to T1514 are compositionally biased toward low complexity. Polar residues-rich tracts occupy residues S1669 to K1687, N1702 to Q1733, and W1742 to N1758. The segment covering P1808–Q1820 has biased composition (low complexity). Positions T1822 to N1831 are enriched in acidic residues.

This sequence belongs to the TMEM131 family. As to quaternary structure, may interact (via PapD-L domain) with collagen proteins (via C-terminus); the interaction is direct and is involved in assembly and secretion of collagen. Predominantly expressed in the intestine and hypodermis.

The protein localises to the membrane. It is found in the endoplasmic reticulum membrane. Collagen binding transmembrane protein involved in collagen secretion, probably by recruiting the ER-to-Golgi transport complex TRAPPIII. Required for normal development. The protein is Transmembrane protein 131 homolog of Caenorhabditis elegans.